We begin with the raw amino-acid sequence, 498 residues long: Glycerol kinase (498 aa).

T11 is a binding site for ADP. T11, S12, and S13 together coordinate ATP. T11 contacts sn-glycerol 3-phosphate. R15 provides a ligand contact to ADP. Sn-glycerol 3-phosphate contacts are provided by R81, E82, Y133, and D242. Positions 81, 82, 133, 242, and 243 each coordinate glycerol. ADP contacts are provided by T264 and G307. ATP is bound by residues T264, G307, Q311, and G412. Positions 412 and 416 each coordinate ADP.

This sequence belongs to the FGGY kinase family.

The catalysed reaction is glycerol + ATP = sn-glycerol 3-phosphate + ADP + H(+). Its pathway is polyol metabolism; glycerol degradation via glycerol kinase pathway; sn-glycerol 3-phosphate from glycerol: step 1/1. With respect to regulation, inhibited by fructose 1,6-bisphosphate (FBP). Its function is as follows. Key enzyme in the regulation of glycerol uptake and metabolism. Catalyzes the phosphorylation of glycerol to yield sn-glycerol 3-phosphate. This Acidovorax sp. (strain JS42) protein is Glycerol kinase.